Consider the following 355-residue polypeptide: UDP-N-acetylglucosamine--N-acetylmuramyl-(pentapeptide) pyrophosphoryl-undecaprenol N-acetylglucosamine transferase (355 aa).

UDP-N-acetyl-alpha-D-glucosamine-binding positions include 15-17, asparagine 127, arginine 163, serine 191, isoleucine 244, 263-268, and glutamine 288; these read TGG and ALTVSE.

It belongs to the glycosyltransferase 28 family. MurG subfamily.

It localises to the cell inner membrane. The catalysed reaction is di-trans,octa-cis-undecaprenyl diphospho-N-acetyl-alpha-D-muramoyl-L-alanyl-D-glutamyl-meso-2,6-diaminopimeloyl-D-alanyl-D-alanine + UDP-N-acetyl-alpha-D-glucosamine = di-trans,octa-cis-undecaprenyl diphospho-[N-acetyl-alpha-D-glucosaminyl-(1-&gt;4)]-N-acetyl-alpha-D-muramoyl-L-alanyl-D-glutamyl-meso-2,6-diaminopimeloyl-D-alanyl-D-alanine + UDP + H(+). The protein operates within cell wall biogenesis; peptidoglycan biosynthesis. Functionally, cell wall formation. Catalyzes the transfer of a GlcNAc subunit on undecaprenyl-pyrophosphoryl-MurNAc-pentapeptide (lipid intermediate I) to form undecaprenyl-pyrophosphoryl-MurNAc-(pentapeptide)GlcNAc (lipid intermediate II). This is UDP-N-acetylglucosamine--N-acetylmuramyl-(pentapeptide) pyrophosphoryl-undecaprenol N-acetylglucosamine transferase from Salmonella gallinarum (strain 287/91 / NCTC 13346).